The primary structure comprises 579 residues: Arginine--tRNA ligase (579 aa).

Positions 127 to 137 match the 'HIGH' region motif; it reads PNLAKEMHVGH.

This sequence belongs to the class-I aminoacyl-tRNA synthetase family. In terms of assembly, monomer.

The protein localises to the cytoplasm. It carries out the reaction tRNA(Arg) + L-arginine + ATP = L-arginyl-tRNA(Arg) + AMP + diphosphate. This Azotobacter vinelandii (strain DJ / ATCC BAA-1303) protein is Arginine--tRNA ligase.